We begin with the raw amino-acid sequence, 293 residues long: Eukaryotic translation initiation factor 3 subunit F (293 aa).

Ala-2 carries the N-acetylalanine modification. In terms of domain architecture, MPN spans Ala-28–Ser-159.

This sequence belongs to the eIF-3 subunit F family. As to quaternary structure, component of the eukaryotic translation initiation factor 3 (eIF-3) complex. Binds to TIF3E1 and TIF3H1. As to expression, expressed in inflorescences, leaves, stems, siliques, roots and seedlings. Accumulates at highly levels in pollen grains, developing embryos and root tips.

It localises to the cytoplasm. Its function is as follows. Component of the eukaryotic translation initiation factor 3 (eIF-3) complex, which is involved in protein synthesis of a specialized repertoire of mRNAs and, together with other initiation factors, stimulates binding of mRNA and methionyl-tRNAi to the 40S ribosome. The eIF-3 complex specifically targets and initiates translation of a subset of mRNAs involved in cell proliferation (Potential). Involved in cell growth and differentiation, especially during embryogenesis and male gametophyte germination. Regulates sensitivity to sugars (e.g. sucrose). The protein is Eukaryotic translation initiation factor 3 subunit F (TIF3F1) of Arabidopsis thaliana (Mouse-ear cress).